A 113-amino-acid chain; its full sequence is U11-theraphotoxin-Hhn1o (113 aa).

The first 21 residues, 1-21, serve as a signal peptide directing secretion; that stretch reads MNTVRVTFLLVFVLAVSLGQA. The propeptide occupies 22-74; sequence DKDENRMEMQEKTEQGKSYLDFAENLLLQKLEELEAKLLEEDSEESRNSRQKR. The tract at residues 61 to 83 is disordered; sequence EEDSEESRNSRQKRCIGEGVPCD. 2 cysteine pairs are disulfide-bonded: Cys75-Cys90 and Cys82-Cys95.

The protein belongs to the neurotoxin 14 (magi-1) family. 01 (HNTX-16) subfamily. In terms of tissue distribution, expressed by the venom gland.

The protein localises to the secreted. Probable ion channel inhibitor. This Cyriopagopus hainanus (Chinese bird spider) protein is U11-theraphotoxin-Hhn1o.